The chain runs to 533 residues: RNA end formation protein 2 (533 aa).

Disordered regions lie at residues 187 to 254 (SNST…SSMK), 260 to 279 (LFNK…SKKK), and 321 to 344 (SSST…PLKK). The span at 206–222 (KIKDSEKEKEKEKDKSK) shows a compositional bias: basic and acidic residues. The segment covering 242–252 (SSPSPTASTSS) has biased composition (low complexity). The span at 321–338 (SSSTSGSSTTTVATPASS) shows a compositional bias: low complexity.

In terms of assembly, interacts with FIR1. Component of the cleavage and polyadenylation factor (CPF) complex, which is composed of PTI1, SYC1, SSU72, GLC7, MPE1, REF2, PFS2, PTA1, YSH1/BRR5, SWD2, CFT2/YDH1, YTH1, CFT1/YHH1, FIP1 and PAP1. Component of the APT complex, which is a subcomplex of CPF, and is composed of PTI1, SYC1, SSU72, GLC7, REF2, PTA1 and SWD2.

The protein resides in the nucleus. In terms of biological role, RNA-binding component of the cleavage and polyadenylation factor (CPF) complex, which plays a key role in polyadenylation-dependent pre-mRNA 3'-end formation and cooperates with cleavage factors including the CFIA complex and NAB4/CFIB. Negative regulator of poly(A) synthesis. Component of the APT complex, which may be involved in polyadenylation-independent transcript 3'-end formation. REF2 is required for 3'-end formation of snoRNAs. This Saccharomyces cerevisiae (strain ATCC 204508 / S288c) (Baker's yeast) protein is RNA end formation protein 2 (REF2).